Here is a 369-residue protein sequence, read N- to C-terminus: Cobalt-precorrin-5B C(1)-methyltransferase (369 aa).

The protein belongs to the CbiD family.

The catalysed reaction is Co-precorrin-5B + S-adenosyl-L-methionine = Co-precorrin-6A + S-adenosyl-L-homocysteine. It participates in cofactor biosynthesis; adenosylcobalamin biosynthesis; cob(II)yrinate a,c-diamide from sirohydrochlorin (anaerobic route): step 6/10. Its function is as follows. Catalyzes the methylation of C-1 in cobalt-precorrin-5B to form cobalt-precorrin-6A. In Prosthecochloris aestuarii (strain DSM 271 / SK 413), this protein is Cobalt-precorrin-5B C(1)-methyltransferase.